Reading from the N-terminus, the 163-residue chain is Nucleotide-binding protein NFA_51200 (163 aa).

It belongs to the YajQ family.

In terms of biological role, nucleotide-binding protein. The chain is Nucleotide-binding protein NFA_51200 from Nocardia farcinica (strain IFM 10152).